The primary structure comprises 221 residues: Translation initiation factor 6 (221 aa).

Belongs to the eIF-6 family.

Its function is as follows. Binds to the 50S ribosomal subunit and prevents its association with the 30S ribosomal subunit to form the 70S initiation complex. The sequence is that of Translation initiation factor 6 from Cenarchaeum symbiosum (strain A).